Here is a 232-residue protein sequence, read N- to C-terminus: Triosephosphate isomerase (232 aa).

Substrate is bound at residue 6 to 8; that stretch reads NFK. The Electrophile role is filled by His86. The Proton acceptor role is filled by Glu155. Gly161 and Ser191 together coordinate substrate.

This sequence belongs to the triosephosphate isomerase family. Homodimer.

The protein localises to the cytoplasm. It carries out the reaction D-glyceraldehyde 3-phosphate = dihydroxyacetone phosphate. It functions in the pathway carbohydrate biosynthesis; gluconeogenesis. Its pathway is carbohydrate degradation; glycolysis; D-glyceraldehyde 3-phosphate from glycerone phosphate: step 1/1. In terms of biological role, involved in the gluconeogenesis. Catalyzes stereospecifically the conversion of dihydroxyacetone phosphate (DHAP) to D-glyceraldehyde-3-phosphate (G3P). This is Triosephosphate isomerase from Nitratiruptor sp. (strain SB155-2).